The sequence spans 233 residues: Superoxide dismutase [Mn], mitochondrial (233 aa).

A mitochondrion-targeting transit peptide spans 1 to 26 (MFAKTAAANLTKKGGLSLLSTTARRT). The Mn(2+) site is built by histidine 52 and histidine 107. Phosphothreonine occurs at positions 147 and 149. Residues aspartate 194 and histidine 198 each contribute to the Mn(2+) site.

It belongs to the iron/manganese superoxide dismutase family. As to quaternary structure, homotetramer. The cofactor is Mn(2+).

The protein resides in the mitochondrion matrix. It catalyses the reaction 2 superoxide + 2 H(+) = H2O2 + O2. In terms of biological role, destroys superoxide anion radicals which are normally produced within the cells and which are toxic to biological systems. In Saccharomyces cerevisiae (strain ATCC 204508 / S288c) (Baker's yeast), this protein is Superoxide dismutase [Mn], mitochondrial (SOD2).